A 391-amino-acid chain; its full sequence is 1-deoxy-D-xylulose 5-phosphate reductoisomerase (391 aa).

Residues threonine 17, glycine 18, serine 19, isoleucine 20, asparagine 47, and asparagine 130 each contribute to the NADPH site. Lysine 131 is a 1-deoxy-D-xylulose 5-phosphate binding site. Glutamate 132 serves as a coordination point for NADPH. A Mn(2+)-binding site is contributed by aspartate 156. Positions 157, 158, 182, and 205 each coordinate 1-deoxy-D-xylulose 5-phosphate. Glutamate 158 is a binding site for Mn(2+). NADPH is bound at residue glycine 211. Positions 218, 223, 224, and 227 each coordinate 1-deoxy-D-xylulose 5-phosphate. Position 227 (glutamate 227) interacts with Mn(2+).

This sequence belongs to the DXR family. Requires Mg(2+) as cofactor. It depends on Mn(2+) as a cofactor.

It catalyses the reaction 2-C-methyl-D-erythritol 4-phosphate + NADP(+) = 1-deoxy-D-xylulose 5-phosphate + NADPH + H(+). The protein operates within isoprenoid biosynthesis; isopentenyl diphosphate biosynthesis via DXP pathway; isopentenyl diphosphate from 1-deoxy-D-xylulose 5-phosphate: step 1/6. Its function is as follows. Catalyzes the NADPH-dependent rearrangement and reduction of 1-deoxy-D-xylulose-5-phosphate (DXP) to 2-C-methyl-D-erythritol 4-phosphate (MEP). In Sinorhizobium medicae (strain WSM419) (Ensifer medicae), this protein is 1-deoxy-D-xylulose 5-phosphate reductoisomerase.